Reading from the N-terminus, the 232-residue chain is Large ribosomal subunit protein uL1 (232 aa).

Belongs to the universal ribosomal protein uL1 family. In terms of assembly, part of the 50S ribosomal subunit.

In terms of biological role, binds directly to 23S rRNA. The L1 stalk is quite mobile in the ribosome, and is involved in E site tRNA release. Protein L1 is also a translational repressor protein, it controls the translation of the L11 operon by binding to its mRNA. This is Large ribosomal subunit protein uL1 from Cereibacter sphaeroides (strain ATCC 17025 / ATH 2.4.3) (Rhodobacter sphaeroides).